A 220-amino-acid polypeptide reads, in one-letter code: Uracil-DNA glycosylase (220 aa).

The active-site Proton acceptor is aspartate 60.

It belongs to the uracil-DNA glycosylase (UDG) superfamily. UNG family.

The protein localises to the cytoplasm. It carries out the reaction Hydrolyzes single-stranded DNA or mismatched double-stranded DNA and polynucleotides, releasing free uracil.. In terms of biological role, excises uracil residues from the DNA which can arise as a result of misincorporation of dUMP residues by DNA polymerase or due to deamination of cytosine. This chain is Uracil-DNA glycosylase, found in Francisella tularensis subsp. holarctica (strain FTNF002-00 / FTA).